The sequence spans 801 residues: Phenylalanine--tRNA ligase beta subunit (801 aa).

The 115-residue stretch at 39-153 (AEGLSKLVVG…DEAVPGDAIF (115 aa)) folds into the tRNA-binding domain. In terms of domain architecture, B5 spans 406 to 481 (TEPVEVSTNL…RIYGYDKLPT (76 aa)). 4 residues coordinate Mg(2+): Asp459, Asp465, Glu468, and Glu469. Residues 708–801 (TKFPAMTRDI…LTEQVGAEVR (94 aa)) form the FDX-ACB domain.

This sequence belongs to the phenylalanyl-tRNA synthetase beta subunit family. Type 1 subfamily. In terms of assembly, tetramer of two alpha and two beta subunits. Mg(2+) is required as a cofactor.

It is found in the cytoplasm. It carries out the reaction tRNA(Phe) + L-phenylalanine + ATP = L-phenylalanyl-tRNA(Phe) + AMP + diphosphate + H(+). The sequence is that of Phenylalanine--tRNA ligase beta subunit from Streptococcus pyogenes serotype M3 (strain SSI-1).